Here is a 228-residue protein sequence, read N- to C-terminus: tRNA (guanine-N(1)-)-methyltransferase (228 aa).

S-adenosyl-L-methionine contacts are provided by residues Gly111 and Leu135–Leu140.

It belongs to the RNA methyltransferase TrmD family. As to quaternary structure, homodimer.

Its subcellular location is the cytoplasm. The catalysed reaction is guanosine(37) in tRNA + S-adenosyl-L-methionine = N(1)-methylguanosine(37) in tRNA + S-adenosyl-L-homocysteine + H(+). Its function is as follows. Specifically methylates guanosine-37 in various tRNAs. The sequence is that of tRNA (guanine-N(1)-)-methyltransferase from Clavibacter sepedonicus (Clavibacter michiganensis subsp. sepedonicus).